A 351-amino-acid polypeptide reads, in one-letter code: Histidinol-phosphate aminotransferase (351 aa).

Lysine 221 carries the post-translational modification N6-(pyridoxal phosphate)lysine.

It belongs to the class-II pyridoxal-phosphate-dependent aminotransferase family. Histidinol-phosphate aminotransferase subfamily. Homodimer. Requires pyridoxal 5'-phosphate as cofactor.

It carries out the reaction L-histidinol phosphate + 2-oxoglutarate = 3-(imidazol-4-yl)-2-oxopropyl phosphate + L-glutamate. It participates in amino-acid biosynthesis; L-histidine biosynthesis; L-histidine from 5-phospho-alpha-D-ribose 1-diphosphate: step 7/9. The protein is Histidinol-phosphate aminotransferase of Staphylococcus epidermidis (strain ATCC 12228 / FDA PCI 1200).